Consider the following 451-residue polypeptide: Trigger factor (451 aa).

Residues 163-248 enclose the PPIase FKBP-type domain; it reads GDIIDMEYTV…IKALYANILP (86 aa).

It belongs to the FKBP-type PPIase family. Tig subfamily.

It is found in the cytoplasm. The catalysed reaction is [protein]-peptidylproline (omega=180) = [protein]-peptidylproline (omega=0). Its function is as follows. Involved in protein export. Acts as a chaperone by maintaining the newly synthesized protein in an open conformation. Functions as a peptidyl-prolyl cis-trans isomerase. The protein is Trigger factor of Leptospira interrogans serogroup Icterohaemorrhagiae serovar copenhageni (strain Fiocruz L1-130).